A 167-amino-acid chain; its full sequence is Mitochondrial fission 1 protein B (167 aa).

One copy of the TPR repeat lies at 92–125 (REKLYLLALGYYRSGDFSRSRDCIERCLEVEPES). Residues 144–164 (VIGVGIAVTAVGVVAGIAAAI) traverse the membrane as a helical segment.

It belongs to the FIS1 family. In terms of assembly, interacts with PEX11A, PEX11B, PEX11C, PEX11D and PEX11E.

It localises to the mitochondrion outer membrane. The protein localises to the peroxisome membrane. Component of the peroxisomal and mitochondrial division machineries. Plays a role in promoting the fission of mitochondria and peroxisomes. In association with PEX11C, PEX11D, PEX11E and DRP3A, is involved in cell cycle-associated constitutive self-replication of preexisting peroxisomes. The polypeptide is Mitochondrial fission 1 protein B (FIS1B) (Arabidopsis thaliana (Mouse-ear cress)).